A 132-amino-acid polypeptide reads, in one-letter code: Putative RNase AF_0947 (132 aa).

Active-site residues include arginine 91 and histidine 96. Positions 91 to 98 match the RX(4)HXY motif motif; the sequence is RNAIAHHY. Tyrosine 98 is modified (O-di-AMP-tyrosine).

This sequence belongs to the HepT RNase toxin family. Homodimer, probably forms a complex with cognate antitoxin AF_0948. Post-translationally, modified by cognate antitoxin AF_0948; probably at least 2 successive AMPylation events occur on Tyr-98.

In terms of biological role, probable toxic component of a putative type VII toxin-antitoxin (TA) system, probably an RNase. Probably neutralized by cognate antitoxin AF_0948. Neutralization may be due to AMPylation by AF_0948. This chain is Putative RNase AF_0947, found in Archaeoglobus fulgidus (strain ATCC 49558 / DSM 4304 / JCM 9628 / NBRC 100126 / VC-16).